The following is a 284-amino-acid chain: L-ribulose-5-phosphate 3-epimerase UlaE (284 aa).

This sequence belongs to the L-ribulose-5-phosphate 3-epimerase family.

It carries out the reaction L-ribulose 5-phosphate = L-xylulose 5-phosphate. It functions in the pathway cofactor degradation; L-ascorbate degradation; D-xylulose 5-phosphate from L-ascorbate: step 3/4. Its function is as follows. Catalyzes the isomerization of L-xylulose-5-phosphate to L-ribulose-5-phosphate. Is involved in the anaerobic L-ascorbate utilization. The polypeptide is L-ribulose-5-phosphate 3-epimerase UlaE (Escherichia coli O8 (strain IAI1)).